The following is a 129-amino-acid chain: N16.2 matrix protein (129 aa).

A signal peptide spans methionine 1–proline 23. 5 tandem repeats follow at residues asparagine 91 to glycine 92, asparagine 93 to glycine 94, aspartate 95 to glycine 96, asparagine 97 to glycine 98, and asparagine 99 to glycine 100. The 5 X 2 AA tandem repeats of N-G stretch occupies residues asparagine 91–glycine 100.

This sequence belongs to the N16 matrix protein family. As to quaternary structure, heterooligomer; disulfide-linked. Pif97, Pif80, N16 and other proteins form a complex. Component of conchiolin, the organic matrix of nacre. Expressed at extremely high levels in the dorsal region of the mantle, which region may be responsible for the nacreous layer formation, but only in trace amounts at the mantle edge, which region may be responsible for the prismatic layer formation.

The protein resides in the secreted. Its subcellular location is the extracellular space. It localises to the extracellular matrix. May be specifically involved in the formation of the nacreous layer. The protein is N16.2 matrix protein of Pinctada fucata (Akoya pearl oyster).